Reading from the N-terminus, the 294-residue chain is tRNA dimethylallyltransferase (294 aa).

10 to 17 contacts ATP; sequence GPTAVGKT. 12–17 lines the substrate pocket; sequence TAVGKT. Residues 35–38 are interaction with substrate tRNA; it reads DSQQ.

It belongs to the IPP transferase family. Monomer. Mg(2+) is required as a cofactor.

The enzyme catalyses adenosine(37) in tRNA + dimethylallyl diphosphate = N(6)-dimethylallyladenosine(37) in tRNA + diphosphate. In terms of biological role, catalyzes the transfer of a dimethylallyl group onto the adenine at position 37 in tRNAs that read codons beginning with uridine, leading to the formation of N6-(dimethylallyl)adenosine (i(6)A). The protein is tRNA dimethylallyltransferase of Streptococcus pneumoniae serotype 4 (strain ATCC BAA-334 / TIGR4).